A 603-amino-acid polypeptide reads, in one-letter code: Elongation factor 4 (603 aa).

The tr-type G domain maps to 6–188; that stretch reads SKIRNFCIIA…QIVKKIPAPT (183 aa). Residues 18-23 and 135-138 contribute to the GTP site; these read DHGKST and NKVD.

It belongs to the TRAFAC class translation factor GTPase superfamily. Classic translation factor GTPase family. LepA subfamily.

It is found in the cell membrane. It catalyses the reaction GTP + H2O = GDP + phosphate + H(+). Required for accurate and efficient protein synthesis under certain stress conditions. May act as a fidelity factor of the translation reaction, by catalyzing a one-codon backward translocation of tRNAs on improperly translocated ribosomes. Back-translocation proceeds from a post-translocation (POST) complex to a pre-translocation (PRE) complex, thus giving elongation factor G a second chance to translocate the tRNAs correctly. Binds to ribosomes in a GTP-dependent manner. This chain is Elongation factor 4, found in Agathobacter rectalis (strain ATCC 33656 / DSM 3377 / JCM 17463 / KCTC 5835 / VPI 0990) (Eubacterium rectale).